A 542-amino-acid chain; its full sequence is Esterase 6 (542 aa).

Residues 1-19 (MNYVGLIIVLSCLWLGSNA) form the signal peptide. N-linked (GlcNAc...) asparagine glycosylation occurs at Asn40. Cys84 and Cys103 are disulfide-bonded. Ser207 functions as the Acyl-ester intermediate in the catalytic mechanism. The cysteines at positions 259 and 271 are disulfide-linked. Asn418 and Asn454 each carry an N-linked (GlcNAc...) asparagine glycan. His464 functions as the Charge relay system in the catalytic mechanism. A disulfide bridge links Cys512 with Cys533.

The protein belongs to the type-B carboxylesterase/lipase family. Monomer.

Its subcellular location is the secreted. The enzyme catalyses a carboxylic ester + H2O = an alcohol + a carboxylate + H(+). In terms of biological role, transferred from the ejaculatory bulbs of males to the female genitals upon copulation, plays an important role in the reproductive biology. This is Esterase 6 (Est-6) from Drosophila simulans (Fruit fly).